The chain runs to 375 residues: Period circadian protein (375 aa).

Disordered regions lie at residues 27–119, 140–189, and 219–255; these read VTAP…VPPV, KHRE…WEGE, and KCQA…QYTQ. Over residues 69-91 the composition is skewed to low complexity; it reads SGNFTTGSNLHMSSVTNTSNAGT. Residues 92–113 are compositionally biased toward gly residues; the sequence is GTSGTGNSGGGGGGGGGAGPGN. Residues 145–156 show a composition bias toward basic and acidic residues; the sequence is RGRSGEKNKKSA. The span at 224-243 shows a compositional bias: gly residues; it reads GAGGGGSGSVGGTGNIGSGG. Over residues 245-255 the composition is skewed to polar residues; it reads NAQPSTNQYTQ.

Forms a heterodimer with timeless (TIM); the complex then translocates into the nucleus. Post-translationally, phosphorylated with a circadian rhythmicity, probably by the double-time protein (dbt). Phosphorylation could be implicated in the stability of per monomer and in the formation of heterodimer per-tim.

The protein resides in the nucleus. It is found in the cytoplasm. The protein localises to the perinuclear region. In terms of biological role, essential for biological clock functions. Determines the period length of circadian and ultradian rhythms; an increase in PER dosage leads to shortened circadian rhythms and a decrease leads to lengthened circadian rhythms. Essential for the circadian rhythmicity of locomotor activity, eclosion behavior, and for the rhythmic component of the male courtship song that originates in the thoracic nervous system. The biological cycle depends on the rhythmic formation and nuclear localization of the TIM-PER complex. Light induces the degradation of TIM, which promotes elimination of PER. Nuclear activity of the heterodimer coordinatively regulates PER and TIM transcription through a negative feedback loop. Behaves as a negative element in circadian transcriptional loop. Does not appear to bind DNA, suggesting indirect transcriptional inhibition. This chain is Period circadian protein (per), found in Drosophila sucinea (Fruit fly).